A 406-amino-acid chain; its full sequence is GTPase Obg (406 aa).

The region spanning 1 to 159 (MKFVDEVSIF…RDLKLELKVL (159 aa)) is the Obg domain. Residues 126 to 149 (GNTRFKSSTNRAPRQTTPGKPGES) are disordered. Polar residues predominate over residues 129–143 (RFKSSTNRAPRQTTP). The OBG-type G domain maps to 160 to 333 (ADVGLLGLPN…ICRDIMHYLE (174 aa)). Residues 166–173 (GLPNAGKS), 191–195 (FTTLV), 213–216 (DIPG), 283–286 (NKMD), and 314–316 (SAI) each bind GTP. Serine 173 and threonine 193 together coordinate Mg(2+). The interval 376 to 406 (SGVRSVDDIDEDDDFFDDEDDDGPEIIYVRD) is disordered. Residues 383–399 (DIDEDDDFFDDEDDDGP) show a composition bias toward acidic residues.

It belongs to the TRAFAC class OBG-HflX-like GTPase superfamily. OBG GTPase family. In terms of assembly, monomer. It depends on Mg(2+) as a cofactor.

It localises to the cytoplasm. Its function is as follows. An essential GTPase which binds GTP, GDP and possibly (p)ppGpp with moderate affinity, with high nucleotide exchange rates and a fairly low GTP hydrolysis rate. Plays a role in control of the cell cycle, stress response, ribosome biogenesis and in those bacteria that undergo differentiation, in morphogenesis control. This Ectopseudomonas mendocina (strain ymp) (Pseudomonas mendocina) protein is GTPase Obg.